A 91-amino-acid polypeptide reads, in one-letter code: Putative methyltransferase YfdM (91 aa).

This chain is Putative methyltransferase YfdM (yfdM), found in Escherichia coli (strain K12).